Consider the following 182-residue polypeptide: NADH-quinone oxidoreductase subunit B (182 aa).

Residues cysteine 61, cysteine 62, cysteine 126, and cysteine 156 each contribute to the [4Fe-4S] cluster site.

This sequence belongs to the complex I 20 kDa subunit family. NDH-1 is composed of 14 different subunits. Subunits NuoB, C, D, E, F, and G constitute the peripheral sector of the complex. It depends on [4Fe-4S] cluster as a cofactor.

The protein localises to the cell inner membrane. The enzyme catalyses a quinone + NADH + 5 H(+)(in) = a quinol + NAD(+) + 4 H(+)(out). Functionally, NDH-1 shuttles electrons from NADH, via FMN and iron-sulfur (Fe-S) centers, to quinones in the respiratory chain. The immediate electron acceptor for the enzyme in this species is believed to be ubiquinone. Couples the redox reaction to proton translocation (for every two electrons transferred, four hydrogen ions are translocated across the cytoplasmic membrane), and thus conserves the redox energy in a proton gradient. This is NADH-quinone oxidoreductase subunit B from Xanthomonas oryzae pv. oryzae (strain PXO99A).